Reading from the N-terminus, the 369-residue chain is Tyrosine-protein phosphatase non-receptor type 5 (369 aa).

Ser49 carries the post-translational modification Phosphoserine; by PKA. A Phosphothreonine; by MAPK modification is found at Thr59. Ser72 carries the phosphoserine; by MAPK modification. The Tyrosine-protein phosphatase domain maps to Leu104–Tyr359. Substrate contacts are provided by residues Asp265, Cys300–Arg306, and Gln344. Cys300 (phosphocysteine intermediate) is an active-site residue.

It belongs to the protein-tyrosine phosphatase family. Non-receptor class subfamily. Phosphorylation at Ser-49 by PKA deactivates PTPN5. Phosphorylation at Thr-59 and Ser-72 by MAPKs stabilizes the phosphatase, dephosphorylation of these sites results in ubiquitin-mediated degradation of the active phosphatase. Expressed in the central nervous system except in the cerebellum. Enriched within the striatum relative to other brain areas.

The protein resides in the cytoplasm. The catalysed reaction is O-phospho-L-tyrosyl-[protein] + H2O = L-tyrosyl-[protein] + phosphate. Its function is as follows. May regulate the activity of several effector molecules involved in synaptic plasticity and neuronal cell survival, including MAPKs, Src family kinases and NMDA receptors. In Rattus norvegicus (Rat), this protein is Tyrosine-protein phosphatase non-receptor type 5 (Ptpn5).